Consider the following 102-residue polypeptide: Large ribosomal subunit protein bL21 (102 aa).

This sequence belongs to the bacterial ribosomal protein bL21 family. In terms of assembly, part of the 50S ribosomal subunit. Contacts protein L20.

This protein binds to 23S rRNA in the presence of protein L20. This chain is Large ribosomal subunit protein bL21, found in Trichlorobacter lovleyi (strain ATCC BAA-1151 / DSM 17278 / SZ) (Geobacter lovleyi).